Consider the following 510-residue polypeptide: Bifunctional purine biosynthesis protein PurH (510 aa).

The 142-residue stretch at 1 to 142 (MRALLSVSDK…KNYKDVMVLC (142 aa)) folds into the MGS-like domain.

It belongs to the PurH family.

The enzyme catalyses (6R)-10-formyltetrahydrofolate + 5-amino-1-(5-phospho-beta-D-ribosyl)imidazole-4-carboxamide = 5-formamido-1-(5-phospho-D-ribosyl)imidazole-4-carboxamide + (6S)-5,6,7,8-tetrahydrofolate. It catalyses the reaction IMP + H2O = 5-formamido-1-(5-phospho-D-ribosyl)imidazole-4-carboxamide. It functions in the pathway purine metabolism; IMP biosynthesis via de novo pathway; 5-formamido-1-(5-phospho-D-ribosyl)imidazole-4-carboxamide from 5-amino-1-(5-phospho-D-ribosyl)imidazole-4-carboxamide (10-formyl THF route): step 1/1. The protein operates within purine metabolism; IMP biosynthesis via de novo pathway; IMP from 5-formamido-1-(5-phospho-D-ribosyl)imidazole-4-carboxamide: step 1/1. This is Bifunctional purine biosynthesis protein PurH from Campylobacter jejuni subsp. doylei (strain ATCC BAA-1458 / RM4099 / 269.97).